Reading from the N-terminus, the 90-residue chain is ATP synthase subunit c (90 aa).

The next 2 membrane-spanning stretches (helical) occupy residues Pro-17–Val-37 and Leu-70–Val-90.

The protein belongs to the ATPase C chain family. As to quaternary structure, F-type ATPases have 2 components, F(1) - the catalytic core - and F(0) - the membrane proton channel. F(1) has five subunits: alpha(3), beta(3), gamma(1), delta(1), epsilon(1). F(0) has three main subunits: a(1), b(2) and c(10-14). The alpha and beta chains form an alternating ring which encloses part of the gamma chain. F(1) is attached to F(0) by a central stalk formed by the gamma and epsilon chains, while a peripheral stalk is formed by the delta and b chains.

It localises to the cell membrane. F(1)F(0) ATP synthase produces ATP from ADP in the presence of a proton or sodium gradient. F-type ATPases consist of two structural domains, F(1) containing the extramembraneous catalytic core and F(0) containing the membrane proton channel, linked together by a central stalk and a peripheral stalk. During catalysis, ATP synthesis in the catalytic domain of F(1) is coupled via a rotary mechanism of the central stalk subunits to proton translocation. Its function is as follows. Key component of the F(0) channel; it plays a direct role in translocation across the membrane. A homomeric c-ring of between 10-14 subunits forms the central stalk rotor element with the F(1) delta and epsilon subunits. The chain is ATP synthase subunit c from Metamycoplasma arthritidis (strain 158L3-1) (Mycoplasma arthritidis).